A 583-amino-acid chain; its full sequence is Protein disulfide-isomerase-like protein of the testis (583 aa).

An N-terminal signal peptide occupies residues 1-17; it reads MDLLWMPLLLVAARISA. N-linked (GlcNAc...) asparagine glycans are attached at residues Asn-58, Asn-128, Asn-160, and Asn-340. Residues 388 to 451 form the Thioredoxin domain; the sequence is LVKQLVGKNF…IAKIDITAND (64 aa). 2 stretches are compositionally biased toward basic and acidic residues: residues 522–531 and 540–559; these read EVPMMKKELP and NVTKHVSKLEESAGKKKTSE. The segment at 522 to 583 is disordered; it reads EVPMMKKELP…KKKPKVKEEL (62 aa). A glycan (N-linked (GlcNAc...) asparagine) is linked at Asn-540. The span at 573–583 shows a compositional bias: basic residues; the sequence is QKKKPKVKEEL. The Prevents secretion from ER signature appears at 580–583; the sequence is KEEL.

This sequence belongs to the protein disulfide isomerase family. In terms of assembly, homodimer. The homodimer is not disulfide-linked. Interacts with ERO1A and CLGN. N-glycosylated.

It is found in the endoplasmic reticulum. Its function is as follows. Probable redox-inactive chaperone involved in spermatogenesis. The chain is Protein disulfide-isomerase-like protein of the testis (PDILT) from Macaca fascicularis (Crab-eating macaque).